The sequence spans 444 residues: N-succinylarginine dihydrolase (444 aa).

Substrate is bound by residues 19–28 (SGLSVGNIAS), asparagine 110, and 137–138 (HR). Glutamate 174 is an active-site residue. Position 214 (arginine 214) interacts with substrate. Residue histidine 250 is part of the active site. Aspartate 252 and asparagine 362 together coordinate substrate. The active-site Nucleophile is the cysteine 368.

The protein belongs to the succinylarginine dihydrolase family. Homodimer.

The catalysed reaction is N(2)-succinyl-L-arginine + 2 H2O + 2 H(+) = N(2)-succinyl-L-ornithine + 2 NH4(+) + CO2. Its pathway is amino-acid degradation; L-arginine degradation via AST pathway; L-glutamate and succinate from L-arginine: step 2/5. Functionally, catalyzes the hydrolysis of N(2)-succinylarginine into N(2)-succinylornithine, ammonia and CO(2). The sequence is that of N-succinylarginine dihydrolase from Aliivibrio salmonicida (strain LFI1238) (Vibrio salmonicida (strain LFI1238)).